Consider the following 497-residue polypeptide: Glutamyl-tRNA(Gln) amidotransferase subunit A (497 aa).

Active-site charge relay system residues include Lys-91 and Ser-166. The segment at 143–171 (SSTENSAYGPTHNPWDLERTAGGSGGGSS) is disordered. Ser-190 (acyl-ester intermediate) is an active-site residue.

The protein belongs to the amidase family. GatA subfamily. Heterotrimer of A, B and C subunits.

The enzyme catalyses L-glutamyl-tRNA(Gln) + L-glutamine + ATP + H2O = L-glutaminyl-tRNA(Gln) + L-glutamate + ADP + phosphate + H(+). Allows the formation of correctly charged Gln-tRNA(Gln) through the transamidation of misacylated Glu-tRNA(Gln) in organisms which lack glutaminyl-tRNA synthetase. The reaction takes place in the presence of glutamine and ATP through an activated gamma-phospho-Glu-tRNA(Gln). The polypeptide is Glutamyl-tRNA(Gln) amidotransferase subunit A (Corynebacterium glutamicum (strain ATCC 13032 / DSM 20300 / JCM 1318 / BCRC 11384 / CCUG 27702 / LMG 3730 / NBRC 12168 / NCIMB 10025 / NRRL B-2784 / 534)).